Reading from the N-terminus, the 118-residue chain is MICOS complex subunit MIC13 (118 aa).

Residues 1-7 (MVPRVWS) are Mitochondrial matrix-facing. A helical membrane pass occupies residues 8–26 (LMRFLIKGSVAGGAIYLVY). At 27–118 (DQDPLGPSDK…GWEYLKERTK (92 aa)) the chain is on the mitochondrial intermembrane side.

It belongs to the MICOS complex subunit Mic13 family. As to quaternary structure, component of the mitochondrial contact site and cristae organizing system (MICOS) complex, composed of at least MICOS10/MIC10, CHCHD3/MIC19, CHCHD6/MIC25, APOO/MIC26, MICOS13/MIC13, APOOL/MIC27 and IMMT/MIC60. The MICOS complex associates with mitochondrial outer membrane proteins SAMM50, MTX1 and MTX2 (together described as components of the mitochondrial outer membrane sorting assembly machinery (SAM) complex) and DNAJC11, mitochondrial inner membrane protein TMEM11 and with HSPA9. The MICOS and SAM complexes together with DNAJC11 are part of a large protein complex spanning both membranes termed the mitochondrial intermembrane space bridging (MIB) complex.

The protein localises to the mitochondrion inner membrane. Component of the MICOS complex, a large protein complex of the mitochondrial inner membrane that plays crucial roles in the maintenance of crista junctions, inner membrane architecture, and formation of contact sites to the outer membrane. Constituent of mature MICOS complex, it is required for the formation of cristae junction (CJ) and maintenance of cristae morphology. Required for the incorporation of MICOS10/MIC10 into the MICOS complex. In Sus scrofa (Pig), this protein is MICOS complex subunit MIC13.